The following is a 207-amino-acid chain: Large ribosomal subunit protein bL25 (207 aa).

Residues 1–20 (MANHQIKAQRRKDEGKGASR) form a disordered region.

This sequence belongs to the bacterial ribosomal protein bL25 family. CTC subfamily. Part of the 50S ribosomal subunit; part of the 5S rRNA/L5/L18/L25 subcomplex. Contacts the 5S rRNA. Binds to the 5S rRNA independently of L5 and L18.

Functionally, this is one of the proteins that binds to the 5S RNA in the ribosome where it forms part of the central protuberance. This chain is Large ribosomal subunit protein bL25, found in Xylella fastidiosa (strain M12).